The following is a 196-amino-acid chain: Putative adenylate kinase (196 aa).

ATP is bound by residues glycine 10, glycine 12, lysine 13, threonine 14, and serine 15. The NMP stretch occupies residues 30–53 (YLNDLIKEEHLYSEVDEERDSVIA). The LID stretch occupies residues 118–128 (KRGYSEEKINE). Arginine 119 is a binding site for ATP.

The protein belongs to the adenylate kinase family. AK6 subfamily. Interacts with uS11. Not a structural component of 40S pre-ribosomes, but transiently interacts with them by binding to uS11.

It catalyses the reaction AMP + ATP = 2 ADP. The catalysed reaction is ATP + H2O = ADP + phosphate + H(+). In terms of biological role, broad-specificity nucleoside monophosphate (NMP) kinase that catalyzes the reversible transfer of the terminal phosphate group between nucleoside triphosphates and monophosphates. Also has ATPase activity. Involved in the late maturation steps of the 30S ribosomal particles, specifically 16S rRNA maturation. While NMP activity is not required for ribosome maturation, ATPase activity is. Associates transiently with small ribosomal subunit protein uS11. ATP hydrolysis breaks the interaction with uS11. May temporarily remove uS11 from the ribosome to enable a conformational change of the ribosomal RNA that is needed for the final maturation step of the small ribosomal subunit. The protein is Putative adenylate kinase of Methanosarcina mazei (strain ATCC BAA-159 / DSM 3647 / Goe1 / Go1 / JCM 11833 / OCM 88) (Methanosarcina frisia).